Consider the following 222-residue polypeptide: Uridine diphosphate glucose pyrophosphatase NUDT14 (222 aa).

Residues 38 to 206 (KTHDSVTILM…DIPKTLGVIY (169 aa)) enclose the Nudix hydrolase domain. The short motif at 111–129 (PGLSLEEAACKEAWEECGY) is the Nudix box element.

Belongs to the Nudix hydrolase family. As to quaternary structure, homodimer. Mg(2+) is required as a cofactor.

It is found in the cytoplasm. It catalyses the reaction UDP-sugar + H2O = UMP + alpha-D-aldose 1-phosphate.. Hydrolyzes UDP-glucose to glucose 1-phosphate and UMP and ADP-ribose to ribose 5-phosphate and AMP. The physiological substrate is probably UDP-glucose. Poor activity on other substrates such as ADP-glucose, CDP-glucose, GDP-glucose and GDP-mannose. The protein is Uridine diphosphate glucose pyrophosphatase NUDT14 (Nudt14) of Mus musculus (Mouse).